A 326-amino-acid polypeptide reads, in one-letter code: Prenyl transferase nodC (326 aa).

A helical membrane pass occupies residues 8 to 28 (LAAVLFSALFSLGVILVHLPW). Position 95 (histidine 95) interacts with isopentenyl diphosphate. The Mg(2+) site is built by aspartate 102 and aspartate 106. Arginine 111 is a binding site for dimethylallyl diphosphate. Residue asparagine 139 is glycosylated (N-linked (GlcNAc...) asparagine). A dimethylallyl diphosphate-binding site is contributed by lysine 195. N-linked (GlcNAc...) asparagine glycosylation occurs at asparagine 210.

Belongs to the FPP/GGPP synthase family.

The protein resides in the membrane. Its pathway is secondary metabolite biosynthesis. Functionally, cytochrome P450 monooxygenase; part of the gene cluster that mediates the biosynthesis of the indole diterpenes nodulisporic acids (NA). Nodulisporic acid A (NAA) and its chemically modified derivatives are of particular significance because of their highly potent insecticidal activity against blood-feeding arthropods and lack of observable adverse effects on mammals, in particular the tremogenicity associated with the paspaline-derived IDTs is not observed. The geranylgeranyl diphosphate (GGPP) synthase ggs1, localized outside of the cluster, is proposed to catalyze the first step in nodulisporic acid biosynthesis via conversion of farnesyl pyrophosphate and isopentyl pyrophosphate into geranylgeranyl pyrophosphate (GGPP). Condensation of indole-3-glycerol phosphate with GGPP by the prenyl transferase nodC then forms 3-geranylgeranylindole (3-GGI). Epoxidation by the FAD-dependent monooxygenase nodM leads to a single-epoxidized-GGI that is substrate of the terpene cyclase nodB for cyclization to yield emindole SB. The terminal methyl carbon, C28, of emindole SB is then oxidized by the cytochrome P450 monooxygenase nodW to produce nodulisporic acid F (NAF), the pentacyclic core of NAA. NAF is converted to nodulisporic acid E (NAE) via prenylation. This step is probably performed by one of the indole diterpene prenyltransferases nodD1 or nodD2. Several oxidation steps performed by the FAD-linked oxidoreductase nodO and one of the cytochrome P450 monooxygenase nodR, nodX or nodZ further convert NAE to nodulisporic acid D (NAD). NAD is substrate of cytochrome P450 monooxygenase nodJ to produce the precursor of nodulisporic acid C (NAC), converted to NAC by one of the indole diterpene prenyltransferases nodD1 or nodD2. The FAD-dependent monooxygenase nodY2 then oxidizes NAC to nodulisporic acid B (NAB). Finally NAB is converted to NAA by one of the cytochrome P450 monooxygenases nodR, nodX or nodZ. The polypeptide is Prenyl transferase nodC (Hypoxylon pulicicidum).